The primary structure comprises 618 residues: Transcriptional regulator CPUR_05421 (618 aa).

A DNA-binding region (zn(2)-C6 fungal-type) is located at residues 14–41 (CSHLVGREIGCSRDLAGCRRCTSEGRAC). The tract at residues 52–87 (TRRRNRANQDVTRSALYSSNTTPQTISDQATGRPCE) is disordered. The span at 59 to 81 (NQDVTRSALYSSNTTPQTISDQA) shows a compositional bias: polar residues.

Its subcellular location is the nucleus. Functionally, transcriptional regulator; part of the ergochrome gene cluster responsible for the typical purple-black color of the ergot sclerotia. The ergochrome gene cluster produces several ergot pigments including the yellow ergochrome secalonic acid and its derivatives, as well as the red anthraquinones endocrocin and clavorubin. The chain is Transcriptional regulator CPUR_05421 from Claviceps purpurea (strain 20.1) (Ergot fungus).